The primary structure comprises 149 residues: Large ribosomal subunit protein eL8 (149 aa).

Belongs to the eukaryotic ribosomal protein eL8 family. Part of the 50S ribosomal subunit. Probably part of the RNase P complex.

It localises to the cytoplasm. Functionally, multifunctional RNA-binding protein that recognizes the K-turn motif in ribosomal RNA, the RNA component of RNase P, box H/ACA, box C/D and box C'/D' sRNAs. This is Large ribosomal subunit protein eL8 from Pyrobaculum calidifontis (strain DSM 21063 / JCM 11548 / VA1).